The following is a 485-amino-acid chain: NADH-quinone oxidoreductase subunit N (485 aa).

14 helical membrane passes run 8-28, 35-55, 71-91, 105-125, 127-147, 159-179, 203-223, 235-255, 271-291, 297-317, 326-346, 373-393, 408-430, and 455-475; these read LIALLPLLIVGLTVVVVMLSI, FLNATLSVIGLNAALVSLWFV, GFAMLYTGLVLLASLATCTFA, FYLLVLIASLGGILLANANHL, ALFLGIELISLPLFGLIGYAF, YTILSAAASSFLLFGMALVYA, LLAGFGLMIVGLGFKLSLVPF, PAPVSTFLATASKIAIFGVVM, VVLGIIAFASIIFGNLMALSQ, LLGYSSISHLGYLLVALIVLQ, VGVYLAGYLFSSLGAFGVVSL, AAVMTVMMLSLAGIPMTLGFI, WWLVAAVVVGSAIGLYYYLRVAV, and IVVLISALLVLVLGVWPQPLI.

This sequence belongs to the complex I subunit 2 family. In terms of assembly, NDH-1 is composed of 13 different subunits. Subunits NuoA, H, J, K, L, M, N constitute the membrane sector of the complex.

It localises to the cell inner membrane. The enzyme catalyses a quinone + NADH + 5 H(+)(in) = a quinol + NAD(+) + 4 H(+)(out). In terms of biological role, NDH-1 shuttles electrons from NADH, via FMN and iron-sulfur (Fe-S) centers, to quinones in the respiratory chain. The immediate electron acceptor for the enzyme in this species is believed to be ubiquinone. Couples the redox reaction to proton translocation (for every two electrons transferred, four hydrogen ions are translocated across the cytoplasmic membrane), and thus conserves the redox energy in a proton gradient. In Salmonella choleraesuis (strain SC-B67), this protein is NADH-quinone oxidoreductase subunit N.